Reading from the N-terminus, the 310-residue chain is Pseudouridine-5'-phosphate glycosidase (310 aa).

The active-site Proton donor is the Glu-26. Positions 87 and 107 each coordinate substrate. Asp-139 serves as a coordination point for Mn(2+). 141–143 lines the substrate pocket; the sequence is SAD. Lys-160 acts as the Nucleophile in catalysis.

Belongs to the pseudouridine-5'-phosphate glycosidase family. As to quaternary structure, homotrimer. Mn(2+) serves as cofactor.

It carries out the reaction D-ribose 5-phosphate + uracil = psi-UMP + H2O. Functionally, catalyzes the reversible cleavage of pseudouridine 5'-phosphate (PsiMP) to ribose 5-phosphate and uracil. Functions biologically in the cleavage direction, as part of a pseudouridine degradation pathway. This chain is Pseudouridine-5'-phosphate glycosidase, found in Roseobacter denitrificans (strain ATCC 33942 / OCh 114) (Erythrobacter sp. (strain OCh 114)).